A 480-amino-acid polypeptide reads, in one-letter code: Ribulose bisphosphate carboxylase large chain (480 aa).

Residues 1 to 2 (MS) constitute a propeptide that is removed on maturation. Pro-3 carries the post-translational modification N-acetylproline. Lys-14 is subject to N6,N6,N6-trimethyllysine. Substrate-binding residues include Asn-123 and Thr-173. The Proton acceptor role is filled by Lys-175. Lys-177 serves as a coordination point for substrate. Mg(2+) contacts are provided by Lys-201, Asp-203, and Glu-204. Position 201 is an N6-carboxylysine (Lys-201). His-294 serves as the catalytic Proton acceptor. Substrate contacts are provided by Arg-295, His-327, and Ser-379.

Belongs to the RuBisCO large chain family. Type I subfamily. As to quaternary structure, heterohexadecamer of 8 large chains and 8 small chains; disulfide-linked. The disulfide link is formed within the large subunit homodimers. The cofactor is Mg(2+). In terms of processing, the disulfide bond which can form in the large chain dimeric partners within the hexadecamer appears to be associated with oxidative stress and protein turnover.

It is found in the plastid. The protein resides in the chloroplast. It catalyses the reaction 2 (2R)-3-phosphoglycerate + 2 H(+) = D-ribulose 1,5-bisphosphate + CO2 + H2O. The catalysed reaction is D-ribulose 1,5-bisphosphate + O2 = 2-phosphoglycolate + (2R)-3-phosphoglycerate + 2 H(+). Its function is as follows. RuBisCO catalyzes two reactions: the carboxylation of D-ribulose 1,5-bisphosphate, the primary event in carbon dioxide fixation, as well as the oxidative fragmentation of the pentose substrate in the photorespiration process. Both reactions occur simultaneously and in competition at the same active site. The polypeptide is Ribulose bisphosphate carboxylase large chain (Mollugo verticillata (Green carpetweed)).